A 96-amino-acid chain; its full sequence is Co-chaperonin GroES (96 aa).

Belongs to the GroES chaperonin family. As to quaternary structure, heptamer of 7 subunits arranged in a ring. Interacts with the chaperonin GroEL.

Its subcellular location is the cytoplasm. Functionally, together with the chaperonin GroEL, plays an essential role in assisting protein folding. The GroEL-GroES system forms a nano-cage that allows encapsulation of the non-native substrate proteins and provides a physical environment optimized to promote and accelerate protein folding. GroES binds to the apical surface of the GroEL ring, thereby capping the opening of the GroEL channel. In Allochromatium vinosum (Chromatium vinosum), this protein is Co-chaperonin GroES.